Here is a 364-residue protein sequence, read N- to C-terminus: Dihydroorotate dehydrogenase (quinone) (364 aa).

FMN-binding positions include 62–66 (AGFDK) and threonine 86. A substrate-binding site is contributed by lysine 66. 111 to 115 (NRMGF) contacts substrate. FMN contacts are provided by asparagine 142 and asparagine 175. Asparagine 175 lines the substrate pocket. Serine 178 acts as the Nucleophile in catalysis. Residue asparagine 180 coordinates substrate. Residues lysine 216 and threonine 244 each contribute to the FMN site. 245 to 246 (NT) serves as a coordination point for substrate. FMN is bound by residues glycine 267, glycine 296, and 317–318 (YT).

Belongs to the dihydroorotate dehydrogenase family. Type 2 subfamily. As to quaternary structure, monomer. Requires FMN as cofactor.

Its subcellular location is the cell membrane. The enzyme catalyses (S)-dihydroorotate + a quinone = orotate + a quinol. Its pathway is pyrimidine metabolism; UMP biosynthesis via de novo pathway; orotate from (S)-dihydroorotate (quinone route): step 1/1. Functionally, catalyzes the conversion of dihydroorotate to orotate with quinone as electron acceptor. In Anaeromyxobacter dehalogenans (strain 2CP-C), this protein is Dihydroorotate dehydrogenase (quinone).